The primary structure comprises 217 residues: Large ribosomal subunit protein uL3 (217 aa).

The interval 127 to 162 (GFSRGPMSHGSKNHRAPGSTGAGTTPGRIYPGKRMA) is disordered. Residues 142–153 (APGSTGAGTTPG) show a composition bias toward low complexity.

It belongs to the universal ribosomal protein uL3 family. Part of the 50S ribosomal subunit. Forms a cluster with proteins L14 and L19.

One of the primary rRNA binding proteins, it binds directly near the 3'-end of the 23S rRNA, where it nucleates assembly of the 50S subunit. This Prochlorococcus marinus (strain AS9601) protein is Large ribosomal subunit protein uL3.